The primary structure comprises 141 residues: Hemoglobin subunit alpha (141 aa).

Positions 1–141 constitute a Globin domain; the sequence is VLSPADKSNV…VSTVLTSKYR (141 aa). Ser-3 is subject to Phosphoserine. N6-succinyllysine is present on residues Lys-7 and Lys-11. Lys-16 carries the N6-acetyllysine; alternate modification. At Lys-16 the chain carries N6-succinyllysine; alternate. Tyr-24 bears the Phosphotyrosine mark. Residue Ser-35 is modified to Phosphoserine. Lys-40 bears the N6-succinyllysine mark. Ser-49 carries the post-translational modification Phosphoserine. Residue His-58 coordinates O2. A heme b-binding site is contributed by His-87. Ser-102 is subject to Phosphoserine. Thr-108 carries the post-translational modification Phosphothreonine. Phosphoserine is present on residues Ser-124 and Ser-131. Residues Thr-134 and Thr-137 each carry the phosphothreonine modification. Position 138 is a phosphoserine (Ser-138).

It belongs to the globin family. Heterotetramer of two alpha chains and two beta chains. Red blood cells.

Its function is as follows. Involved in oxygen transport from the lung to the various peripheral tissues. Hemopressin acts as an antagonist peptide of the cannabinoid receptor CNR1. Hemopressin-binding efficiently blocks cannabinoid receptor CNR1 and subsequent signaling. This is Hemoglobin subunit alpha (HBA) from Mico argentatus (Silvery marmoset).